Here is a 343-residue protein sequence, read N- to C-terminus: N-acetyl-gamma-glutamyl-phosphate reductase (343 aa).

The active site involves cysteine 146.

It belongs to the NAGSA dehydrogenase family. Type 1 subfamily.

Its subcellular location is the cytoplasm. It carries out the reaction N-acetyl-L-glutamate 5-semialdehyde + phosphate + NADP(+) = N-acetyl-L-glutamyl 5-phosphate + NADPH + H(+). Its pathway is amino-acid biosynthesis; L-arginine biosynthesis; N(2)-acetyl-L-ornithine from L-glutamate: step 3/4. Functionally, catalyzes the NADPH-dependent reduction of N-acetyl-5-glutamyl phosphate to yield N-acetyl-L-glutamate 5-semialdehyde. The polypeptide is N-acetyl-gamma-glutamyl-phosphate reductase (Paenarthrobacter aurescens (strain TC1)).